The sequence spans 423 residues: Gamma-glutamyl phosphate reductase (423 aa).

It belongs to the gamma-glutamyl phosphate reductase family.

The protein resides in the cytoplasm. The enzyme catalyses L-glutamate 5-semialdehyde + phosphate + NADP(+) = L-glutamyl 5-phosphate + NADPH + H(+). It functions in the pathway amino-acid biosynthesis; L-proline biosynthesis; L-glutamate 5-semialdehyde from L-glutamate: step 2/2. Functionally, catalyzes the NADPH-dependent reduction of L-glutamate 5-phosphate into L-glutamate 5-semialdehyde and phosphate. The product spontaneously undergoes cyclization to form 1-pyrroline-5-carboxylate. The sequence is that of Gamma-glutamyl phosphate reductase from Burkholderia ambifaria (strain MC40-6).